A 105-amino-acid chain; its full sequence is uncharacterized protein (105 aa).

This sequence to C.jejuni CJ1463.

This is an uncharacterized protein from Helicobacter pylori (strain ATCC 700392 / 26695) (Campylobacter pylori).